The primary structure comprises 416 residues: MDSSTPQNYLAVIKVVGIGGGGVNAVNRMIEEGLRGVEFIAINTDAQALLMSDADVKLDVGRELTRGLGAGANPDVGRQAAEDHEEEIQEVLKGADMVFVTAGEGGGTGTGGAPVVARIARSLGALTIGVVTRPFTFEGRRRSNQAENGIETLRDEVDTLIVIPNDRLLSISDRNVSMLDAFKSADQVLLSGVSGITDLITTPGLINLDFADVKSVMQGAGSALMGIGSAQGEDRAVKAAELAIASPLLEASIDGAHGVLLSIQGGSDLGLFEINEAARLVQEVAHPEANIIFGAVIDDALGDQARVTVIAAGFDSVSQETNANNSSPAQRQAESTRAAFGGDASRPSGLGRSPQRGGNSYGAPAAGFGSRQGQGQDDDIPDDAGFDVDLPAEADAPSSSNTSARKDSLDFPDFLK.

GTP contacts are provided by residues 20 to 24, 107 to 109, E138, R142, and D186; these read GGGVN and GTG. The segment covering 319–335 has biased composition (polar residues); the sequence is QETNANNSSPAQRQAES. Residues 319–416 form a disordered region; that stretch reads QETNANNSSP…DSLDFPDFLK (98 aa). A compositionally biased stretch (acidic residues) spans 376–392; it reads QDDDIPDDAGFDVDLPA. The segment covering 404–416 has biased composition (basic and acidic residues); the sequence is ARKDSLDFPDFLK.

The protein belongs to the FtsZ family. In terms of assembly, homodimer. Polymerizes to form a dynamic ring structure in a strictly GTP-dependent manner. Interacts directly with several other division proteins.

It is found in the cytoplasm. Its function is as follows. Essential cell division protein that forms a contractile ring structure (Z ring) at the future cell division site. The regulation of the ring assembly controls the timing and the location of cell division. One of the functions of the FtsZ ring is to recruit other cell division proteins to the septum to produce a new cell wall between the dividing cells. Binds GTP and shows GTPase activity. In Kocuria rhizophila (strain ATCC 9341 / DSM 348 / NBRC 103217 / DC2201), this protein is Cell division protein FtsZ.